A 130-amino-acid polypeptide reads, in one-letter code: Protachykinin-1 (130 aa).

The signal sequence occupies residues 1–19 (MKILVAVAVFFLVSTQLSA). Residues 20–56 (EEIGANDDLNYWSDWSDSDQIKEALPEPFEHILQRIA) constitute a propeptide that is removed on maturation. Residues Met-68 and Met-107 each carry the methionine amide modification.

The protein belongs to the tachykinin family. The substance P form is cleaved at Pro-59 by the prolyl endopeptidase FAP (seprase) activity (in vitro). Substance P is also cleaved and degraded by Angiotensin-converting enzyme (ACE) and neprilysin (MME).

The protein localises to the secreted. Functionally, tachykinins are active peptides which excite neurons, evoke behavioral responses, are potent vasodilators and secretagogues, and contract (directly or indirectly) many smooth muscles. The protein is Protachykinin-1 (TAC1) of Mesocricetus auratus (Golden hamster).